An 86-amino-acid chain; its full sequence is MSVKIRLARGGAKKKPFYQVVVADERFPRDGRFIEQLGQYDPRQNPSMVTLKEDKTLEWLNKGAQPTDTVRRLLRTQGVWAKFKQA.

This sequence belongs to the bacterial ribosomal protein bS16 family.

This Syntrophotalea carbinolica (strain DSM 2380 / NBRC 103641 / GraBd1) (Pelobacter carbinolicus) protein is Small ribosomal subunit protein bS16.